Here is a 201-residue protein sequence, read N- to C-terminus: 3-isopropylmalate dehydratase small subunit (201 aa).

It belongs to the LeuD family. LeuD type 1 subfamily. Heterodimer of LeuC and LeuD.

The enzyme catalyses (2R,3S)-3-isopropylmalate = (2S)-2-isopropylmalate. The protein operates within amino-acid biosynthesis; L-leucine biosynthesis; L-leucine from 3-methyl-2-oxobutanoate: step 2/4. Its function is as follows. Catalyzes the isomerization between 2-isopropylmalate and 3-isopropylmalate, via the formation of 2-isopropylmaleate. The protein is 3-isopropylmalate dehydratase small subunit of Rhodopseudomonas palustris (strain BisA53).